Here is a 637-residue protein sequence, read N- to C-terminus: Sodium-dependent phosphate transport protein 2A (637 aa).

The Cytoplasmic portion of the chain corresponds to 1–103 (MMSYSERLGG…LAQVGTKLLK (103 aa)). S14 and S34 each carry phosphoserine. The chain crosses the membrane as a helical span at residues 104–125 (VPLMLAFLYLFVCSLDVLSSAF). Residues 126–145 (QLAGGKVAGDIFKDNAILSN) lie on the Extracellular side of the membrane. The helical transmembrane segment at 146 to 163 (PVAGLVVGILVTVLVQSS) threads the bilayer. Topologically, residues 164-165 (ST) are cytoplasmic. Residues 166 to 185 (STSIIVSMVSSGLLEVSSAI) form a helical membrane-spanning segment. The Extracellular portion of the chain corresponds to 186–345 (PIIMGSNIGT…HIFVDTGLPD (160 aa)). 2 disulfides stabilise this stretch: C225–C520 and C306–C334. N-linked (GlcNAc...) asparagine glycosylation is found at N298 and N328. A helical transmembrane segment spans residues 346–368 (LAVGLILLAGSLVVLCTCLILLV). At 369-410 (KMLNSLLKGQVMSSRRSSTQTDFPAPFTWVTGYFAMVVGASM) the chain is on the cytoplasmic side. The helical transmembrane segment at 411-434 (TFVVQSSSVFTSAITPLIGLGVIS) threads the bilayer. The Extracellular portion of the chain corresponds to 435 to 464 (IERAYPLTLGSNIGTTTTAILAALASPREK). A helical transmembrane segment spans residues 465-485 (LSSSFQIALCHFFFNISGILL). Topologically, residues 486-511 (WYPLPCTRLPIRMAKALGKRTAKYRW) are cytoplasmic. The residue at position 506 (T506) is a Phosphothreonine; by PKC. A helical transmembrane segment spans residues 512–532 (FAVLYLLVCFLLLPSLVFGIS). The Extracellular portion of the chain corresponds to 533 to 537 (MAGWQ). Residues 538–559 (AMVGVGTPFGALLAFVVLVNVL) traverse the membrane as a helical segment. Over 560–637 (QSRSPGHLPK…LPAHHNATRL (78 aa)) the chain is Cytoplasmic. S605 carries the phosphoserine modification. Phosphothreonine is present on T621. A Phosphoserine modification is found at S623.

This sequence belongs to the SLC34A transporter family. As to quaternary structure, interacts via its C-terminal region with NHERF4. Interacts with NHERF1. Interacts with TMEM174; regulates SLC34A1 internalization by PTH and FGF23. As to expression, kidney.

The protein localises to the apical cell membrane. The protein resides in the cell membrane. The enzyme catalyses 3 Na(+)(out) + phosphate(out) = 3 Na(+)(in) + phosphate(in). Its function is as follows. Involved in actively transporting phosphate into cells via Na(+) cotransport in the renal brush border membrane. The cotransport has a Na(+):Pi stoichiometry of 3:1 and is electrogenic. The chain is Sodium-dependent phosphate transport protein 2A from Mus musculus (Mouse).